Reading from the N-terminus, the 120-residue chain is uncharacterized protein (120 aa).

Residues 40 to 62 (SFLTDALLNLIYILFFSSSVFNW) traverse the membrane as a helical segment.

Its subcellular location is the membrane. This is an uncharacterized protein from Saccharomyces cerevisiae (strain ATCC 204508 / S288c) (Baker's yeast).